The following is a 122-amino-acid chain: Large ribosomal subunit protein uL14 (122 aa).

The protein belongs to the universal ribosomal protein uL14 family. Part of the 50S ribosomal subunit. Forms a cluster with proteins L3 and L19. In the 70S ribosome, L14 and L19 interact and together make contacts with the 16S rRNA in bridges B5 and B8.

Its function is as follows. Binds to 23S rRNA. Forms part of two intersubunit bridges in the 70S ribosome. The polypeptide is Large ribosomal subunit protein uL14 (Nostoc punctiforme (strain ATCC 29133 / PCC 73102)).